A 298-amino-acid chain; its full sequence is GTP cyclohydrolase FolE2 (298 aa).

It belongs to the GTP cyclohydrolase IV family.

The enzyme catalyses GTP + H2O = 7,8-dihydroneopterin 3'-triphosphate + formate + H(+). Its pathway is cofactor biosynthesis; 7,8-dihydroneopterin triphosphate biosynthesis; 7,8-dihydroneopterin triphosphate from GTP: step 1/1. In terms of biological role, converts GTP to 7,8-dihydroneopterin triphosphate. In Xylella fastidiosa (strain M23), this protein is GTP cyclohydrolase FolE2.